A 538-amino-acid polypeptide reads, in one-letter code: CTP synthase (538 aa).

The amidoligase domain stretch occupies residues 1-266 (MRTKYIFITG…DQKIVDLLNI (266 aa)). Residue S14 participates in CTP binding. S14 contributes to the UTP binding site. ATP is bound by residues 15–20 (SLGKGL) and D72. Mg(2+)-binding residues include D72 and E140. CTP-binding positions include 147 to 149 (DIE), 187 to 192 (KTKPTQ), and K223. Residues 187 to 192 (KTKPTQ) and K223 each bind UTP. 239–241 (KDV) is an ATP binding site. Residues 291–533 (NIAIVGKYVN…IEAALRYRKK (243 aa)) form the Glutamine amidotransferase type-1 domain. An L-glutamine-binding site is contributed by G353. Residue C380 is the Nucleophile; for glutamine hydrolysis of the active site. L-glutamine-binding positions include 381–384 (LGMQ), E404, and R461. Active-site residues include H506 and E508.

The protein belongs to the CTP synthase family. As to quaternary structure, homotetramer.

The enzyme catalyses UTP + L-glutamine + ATP + H2O = CTP + L-glutamate + ADP + phosphate + 2 H(+). It catalyses the reaction L-glutamine + H2O = L-glutamate + NH4(+). The catalysed reaction is UTP + NH4(+) + ATP = CTP + ADP + phosphate + 2 H(+). It participates in pyrimidine metabolism; CTP biosynthesis via de novo pathway; CTP from UDP: step 2/2. Its activity is regulated as follows. Allosterically activated by GTP, when glutamine is the substrate; GTP has no effect on the reaction when ammonia is the substrate. The allosteric effector GTP functions by stabilizing the protein conformation that binds the tetrahedral intermediate(s) formed during glutamine hydrolysis. Inhibited by the product CTP, via allosteric rather than competitive inhibition. In terms of biological role, catalyzes the ATP-dependent amination of UTP to CTP with either L-glutamine or ammonia as the source of nitrogen. Regulates intracellular CTP levels through interactions with the four ribonucleotide triphosphates. The polypeptide is CTP synthase (Syntrophus aciditrophicus (strain SB)).